We begin with the raw amino-acid sequence, 394 residues long: Protein-glutamate methylesterase/protein-glutamine glutaminase (394 aa).

Residues 1-24 are disordered; sequence MSDGFGRPPPPAPAGHPTGAAGGD. Over residues 15–24 the composition is skewed to low complexity; the sequence is GHPTGAAGGD. The Response regulatory domain maps to 27–145; it reads RVMVVDDSAV…EIGGADAFKR (119 aa). At Asp78 the chain carries 4-aspartylphosphate. The 203-residue stretch at 191 to 393 folds into the CheB-type methylesterase domain; it reads PAPAVGSVGQ…PYIRKFASRA (203 aa). Active-site residues include Ser211, His238, and Asp335.

Belongs to the CheB family. Post-translationally, phosphorylated by CheA. Phosphorylation of the N-terminal regulatory domain activates the methylesterase activity.

It localises to the cytoplasm. The catalysed reaction is [protein]-L-glutamate 5-O-methyl ester + H2O = L-glutamyl-[protein] + methanol + H(+). It carries out the reaction L-glutaminyl-[protein] + H2O = L-glutamyl-[protein] + NH4(+). Functionally, involved in chemotaxis. Part of a chemotaxis signal transduction system that modulates chemotaxis in response to various stimuli. Catalyzes the demethylation of specific methylglutamate residues introduced into the chemoreceptors (methyl-accepting chemotaxis proteins or MCP) by CheR. Also mediates the irreversible deamidation of specific glutamine residues to glutamic acid. The polypeptide is Protein-glutamate methylesterase/protein-glutamine glutaminase (Azospirillum brasilense).